The chain runs to 140 residues: Holo-[acyl-carrier-protein] synthase (140 aa).

The Mg(2+) site is built by Asp7 and Glu58.

Belongs to the P-Pant transferase superfamily. AcpS family. Mg(2+) is required as a cofactor.

It localises to the cytoplasm. The catalysed reaction is apo-[ACP] + CoA = holo-[ACP] + adenosine 3',5'-bisphosphate + H(+). Functionally, transfers the 4'-phosphopantetheine moiety from coenzyme A to a Ser of acyl-carrier-protein. The chain is Holo-[acyl-carrier-protein] synthase from Chloroflexus aggregans (strain MD-66 / DSM 9485).